Reading from the N-terminus, the 196-residue chain is Aequorin-2 (196 aa).

Residues 1 to 7 constitute a propeptide that is removed on maturation; sequence MTSKQYS. EF-hand domains follow at residues 18–53, 54–108, 117–146, and 147–182; these read RWIGRHKHMFNFLDVNHNGKISLDEMVYKASDIVIN, NLGA…AKNE, DALFDIVDKDQNGAITLDEWKAYTKAAGII, and QSSEDCEETFRVCDIDESGQLDVDEMTRQHLGFWYT. Asp-31, Asn-33, Asn-35, Lys-37, and Glu-42 together coordinate Ca(2+). May interact with the chromophore regions lie at residues 47 to 57, 62 to 72, and 107 to 117; these read ASDIVINNLGA, AKRHKDAVEAF, and NEPTLIRIWGD. Ca(2+) contacts are provided by Asp-124, Asp-126, Asn-128, Glu-135, Asp-160, Asp-162, Ser-164, Gln-166, and Glu-171.

It belongs to the aequorin family. The reduction of the disulfide bond is necessary to regenerate aequorin from apoaequorin.

Functionally, ca(2+)-dependent bioluminescence photoprotein. Displays an emission peak at 470 nm (blue light). Trace amounts of calcium ion trigger the intramolecular oxidation of the chromophore, coelenterazine into coelenteramide and CO(2) with the concomitant emission of light. This Aequorea victoria (Water jellyfish) protein is Aequorin-2.